The primary structure comprises 122 residues: MPITTSAQPRKQRLALFNAPLHLRHKLFNAKLSPELEKKLGVKRLPVRRGDTVMILRGDFKGVTGKVVRVDLKKVRIYVEGATRTNSRGQTVYYPIHPSKVMIVDVDMSDKARQKIIERRKK.

The protein belongs to the universal ribosomal protein uL24 family. As to quaternary structure, part of the 50S ribosomal subunit.

In terms of biological role, one of two assembly initiator proteins, it binds directly to the 5'-end of the 23S rRNA, where it nucleates assembly of the 50S subunit. Its function is as follows. Located at the polypeptide exit tunnel on the outside of the subunit. This Pyrobaculum arsenaticum (strain DSM 13514 / JCM 11321 / PZ6) protein is Large ribosomal subunit protein uL24.